Here is a 279-residue protein sequence, read N- to C-terminus: Small ribosomal subunit protein uS2 (279 aa).

Residues 255–279 form a disordered region; that stretch reads LLAGATTAAPEAAAGEAAAAPEQSS.

The protein belongs to the universal ribosomal protein uS2 family.

In Mycolicibacterium gilvum (strain PYR-GCK) (Mycobacterium gilvum (strain PYR-GCK)), this protein is Small ribosomal subunit protein uS2.